The sequence spans 176 residues: Inner membrane assembly complex subunit 17 (176 aa).

Residues 1-28 (MLRVLPTSFKSISTRSAFRACQLSPLTV) constitute a mitochondrion transit peptide. Topologically, residues 29 to 98 (YCPLKSSQGT…MSQEVSLKRF (70 aa)) are mitochondrial matrix. Residues 99-121 (VRPLWVFFLMSSTVYLILHYVWW) traverse the membrane as a helical segment. The Mitochondrial intermembrane portion of the chain corresponds to 122-176 (KLEVVEKEKELQSHVESLEMELDQTLKSQNQNVSSSQNNGNNKTNDKPWYRKWFF). The stretch at 123 to 151 (LEVVEKEKELQSHVESLEMELDQTLKSQN) forms a coiled coil. Residues 149–163 (SQNQNVSSSQNNGNN) are compositionally biased toward low complexity. The tract at residues 149–168 (SQNQNVSSSQNNGNNKTNDK) is disordered.

Belongs to the INA17 family. In terms of assembly, component of the inner membrane assembly (INA) complex, composed of INA17 and INA22. Interacts with a subset of F(1)F(0)-ATP synthase subunits of the F(1)-domain and the peripheral stalk.

The protein resides in the mitochondrion inner membrane. Its function is as follows. Component of the INA complex (INAC) that promotes the biogenesis of mitochondrial F(1)F(0)-ATP synthase. INAC facilitates the assembly of the peripheral stalk and promotes the assembly of the catalytic F(1)-domain with the membrane-embedded F(0)-domain. The sequence is that of Inner membrane assembly complex subunit 17 from Zygosaccharomyces rouxii (strain ATCC 2623 / CBS 732 / NBRC 1130 / NCYC 568 / NRRL Y-229).